The sequence spans 465 residues: Chromosomal replication initiator protein DnaA (465 aa).

Residues 1–84 (MSLSLWQQCL…RFEVGSKPLV (84 aa)) form a domain I, interacts with DnaA modulators region. A domain II region spans residues 84-128 (VQAISQPAQPHHKQVSAAPQQQVRSAPVRPSWDNSPAQAEHTYRS). Positions 91–120 (AQPHHKQVSAAPQQQVRSAPVRPSWDNSPA) are disordered. A domain III, AAA+ region region spans residues 129-345 (NVNPKHTFDN…GALNRVIANA (217 aa)). ATP contacts are provided by Gly-173, Gly-175, Lys-176, and Thr-177. The domain IV, binds dsDNA stretch occupies residues 346–465 (NFTGRSITID…FSNLIRTLSS (120 aa)).

Belongs to the DnaA family. As to quaternary structure, oligomerizes as a right-handed, spiral filament on DNA at oriC.

The protein localises to the cytoplasm. Functionally, plays an essential role in the initiation and regulation of chromosomal replication. ATP-DnaA binds to the origin of replication (oriC) to initiate formation of the DNA replication initiation complex once per cell cycle. Binds the DnaA box (a 9 base pair repeat at the origin) and separates the double-stranded (ds)DNA. Forms a right-handed helical filament on oriC DNA; dsDNA binds to the exterior of the filament while single-stranded (ss)DNA is stabiized in the filament's interior. The ATP-DnaA-oriC complex binds and stabilizes one strand of the AT-rich DNA unwinding element (DUE), permitting loading of DNA polymerase. After initiation quickly degrades to an ADP-DnaA complex that is not apt for DNA replication. Binds acidic phospholipids. The chain is Chromosomal replication initiator protein DnaA from Pectobacterium carotovorum subsp. carotovorum (strain PC1).